Consider the following 401-residue polypeptide: MAEGSGIDRKAEERMEFTTSKEVTVHPTFESMALKESLLRGIYAYGYESPSAVQSRAIVQVCKGRDTIAQAQSGTGKTATFSISMLQVIDTAVRETQALVLSPTRELATQIQSVVMALGDYMNVQCHACIGGTNVGEDIRKLDYGQHIVSGTPGRVADMIRRRHLRTRHIKMLVLDEADELLNQGFREQIYDVYRYLPPATQVVVVSATLPYDVLDMTTKFMTDPVRILVKRDELTLEGLKQYFIAIEKEDWKFDTLCDLYDTLTITQAVIFCNTRRKVDWLTDKMREANFTVSSMHGDMPQKERDSIMQDFRQGNSRVLISTDVWARGIDVQQVSLVINYDLPSNRENYIHRIGRSGRFGRKGVAINFVTSEDVRILRDIELYYSTQIDEMPMNVADLIA.

The short motif at 27-55 is the Q motif element; the sequence is PTFESMALKESLLRGIYAYGYESPSAVQS. The 171-residue stretch at 58 to 228 folds into the Helicase ATP-binding domain; sequence IVQVCKGRDT…TKFMTDPVRI (171 aa). Residue 71–78 coordinates ATP; sequence AQSGTGKT. Positions 176 to 179 match the DEAD box motif; that stretch reads DEAD. A Helicase C-terminal domain is found at 239-400; the sequence is GLKQYFIAIE…EMPMNVADLI (162 aa).

This sequence belongs to the DEAD box helicase family. DDX48/FAL1 subfamily.

It localises to the nucleus. The protein localises to the nucleolus. It carries out the reaction ATP + H2O = ADP + phosphate + H(+). Functionally, ATP-dependent RNA helicase involved in 40S ribosomal subunit biogenesis. Required for the processing and cleavage of 35S pre-rRNA at sites A0, A1, and A2, leading to mature 18S rRNA. The chain is ATP-dependent RNA helicase FAL1 (FAL1) from Pyricularia oryzae (strain 70-15 / ATCC MYA-4617 / FGSC 8958) (Rice blast fungus).